An 855-amino-acid chain; its full sequence is Envelope glycoprotein gp150 (855 aa).

Residues 1 to 784 (MAEGGFTHNQ…WIGKIPQYLK (784 aa)) are Extracellular-facing. N-linked (GlcNAc...) asparagine; by host glycosylation is found at asparagine 135, asparagine 220, asparagine 258, asparagine 269, asparagine 274, asparagine 298, asparagine 330, asparagine 336, asparagine 342, asparagine 372, asparagine 418, asparagine 422, asparagine 448, asparagine 469, asparagine 481, asparagine 499, asparagine 518, asparagine 531, asparagine 548, and asparagine 551. Residues 615–635 (IMLALATVLSMAGAGTGATAI) are fusion peptide. Residues 642–692 (HQVLATHQQALEKITEALKINNLRLITLEHQVLVIGLRVEAIEKFLYTAFA) are a coiled coil. Positions 661–679 (INNLRLITLEHQVLVIGLR) are immunosuppression. N-linked (GlcNAc...) asparagine; by host glycans are attached at residues asparagine 716, asparagine 720, asparagine 728, and asparagine 736. Positions 735 to 771 (YNQTRDLQNKFYEIIMDIEQNNVQGKTGIQQLQKWEN) form a coiled coil. The helical transmembrane segment at 785–805 (GLLGSVLGIGLGILLLLICLP) threads the bilayer. Topologically, residues 806 to 855 (TLVDCIRNCTNKILGYTVIAMPEIDDEEVHLSVELRRNGRQCGISEKEEE) are cytoplasmic.

As to quaternary structure, the mature envelope protein (Env) consists of a trimer of SU-TM heterodimers attached by noncovalent interactions or by a labile interchain disulfide bond. Specific enzymatic cleavages in vivo yield mature proteins. Envelope glycoproteins are synthesized as an inactive precursor that is N-glycosylated and processed likely by host cell furin or by a furin-like protease in the Golgi to yield the mature SU and TM proteins. The cleavage site between SU and TM requires the minimal sequence [KR]-X-[KR]-R.

It localises to the virion membrane. The protein localises to the host cell membrane. The surface protein (SU) attaches the virus to the host cell by binding to its receptor. This interaction triggers the refolding of the transmembrane protein (TM) and is thought to activate its fusogenic potential by unmasking its fusion peptide. Fusion occurs at the host cell plasma membrane. Its function is as follows. The transmembrane protein (TM) acts as a class I viral fusion protein. Under the current model, the protein has at least 3 conformational states: pre-fusion native state, pre-hairpin intermediate state, and post-fusion hairpin state. During viral and target cell membrane fusion, the coiled coil regions (heptad repeats) assume a trimer-of-hairpins structure, positioning the fusion peptide in close proximity to the C-terminal region of the ectodomain. The formation of this structure appears to drive apposition and subsequent fusion of viral and target cell membranes. Membranes fusion leads to delivery of the nucleocapsid into the cytoplasm. In Feline immunodeficiency virus (isolate TM2) (FIV), this protein is Envelope glycoprotein gp150 (env).